Reading from the N-terminus, the 483-residue chain is Cysteine--tRNA ligase (483 aa).

Cys-29 is a Zn(2+) binding site. The 'HIGH' region motif lies at 31–41 (ITVYDYCHLGH). Zn(2+) contacts are provided by Cys-215, His-240, and Glu-244. Residues 272–276 (KMSKS) carry the 'KMSKS' region motif. Lys-275 contacts ATP.

The protein belongs to the class-I aminoacyl-tRNA synthetase family. In terms of assembly, monomer. Zn(2+) serves as cofactor.

It is found in the cytoplasm. The catalysed reaction is tRNA(Cys) + L-cysteine + ATP = L-cysteinyl-tRNA(Cys) + AMP + diphosphate. The protein is Cysteine--tRNA ligase (cysS) of Synechocystis sp. (strain ATCC 27184 / PCC 6803 / Kazusa).